Here is a 235-residue protein sequence, read N- to C-terminus: Small ribosomal subunit protein uS2c (235 aa).

It belongs to the universal ribosomal protein uS2 family.

It is found in the plastid. It localises to the chloroplast. The protein is Small ribosomal subunit protein uS2c (rps2) of Zygnema circumcarinatum (Green alga).